A 425-amino-acid chain; its full sequence is TRAF family member-associated NF-kappa-B activator (425 aa).

Met1 is subject to N-acetylmethionine. The tract at residues 1 to 31 (MDKNIGEQLNKAYEAFRQACMDRDSAVKELQ) is necessary for interaction with ZC3H12A. Positions 22-62 (DRDSAVKELQQKTENYEQRIREQQEQLSLQQTIIDKLKSQL) form a coiled coil. The segment at 70 to 191 (DNNYGCVPLL…QCTDKTDKQE (122 aa)) is necessary for interaction with TRAF6. Phosphoserine is present on residues Ser126 and Ser129. Residues 133 to 172 (HERGNIEKTFWDLKEEFHKICMLAKAQKDHLSKLNIPDTA) are interaction with TBK1 and IKBKE. Positions 172 to 191 (ATETQCSVPIQCTDKTDKQE) are TRAF family member interaction. Ser178 and Ser208 each carry phosphoserine. Phosphothreonine is present on Thr213. 5 positions are modified to phosphoserine: Ser225, Ser228, Ser341, Ser354, and Ser357. Residues 393–420 (PRVCEFCQAVFPPSITSRGDFLRHLNSH) form a UBZ1-type zinc finger. Cys396, Cys399, His416, and His420 together coordinate Zn(2+).

In terms of assembly, homodimer. Found in a deubiquitination complex with TANK, USP10 and ZC3H12A; this complex inhibits genotoxic stress- or interleukin-1-beta-mediated NF-kappaB activation by promoting IKBKG or TRAF6 deubiquitination. Interacts with IKBKG; this interaction increases in response to DNA damage. Interacts with TRAF6; this interaction increases in response to DNA damage and recruits USP10 to the ubiquitinated TRAF6. Interacts with USP10; this interaction increases in response to DNA damage. Interacts with ZC3H12A; this interaction increases in response to DNA damage. Interacts with TBK1. Interacts with IKBKE. Also interacts with TRAF1, TRAF2, and TRAF3 by binding to their TRAF-C domains; the interaction with TRAF2 is disrupted by the phosphorylation of TANK by IKBKE. Interacts more strongly with TRAF1 and TRAF2 than TRAF3. Interacts with IKBKG; the interaction is enhanced by IKBKE and TBK1. Part of a ternary complex consisting of TANK, IKBKB and IKBKG. As to quaternary structure, (Microbial infection) Interacts with vaccinia virus protein C6. (Microbial infection) Interacts with Seneca Valley virus protease 3C; this interaction allows the cleavage of TANK and subsequent suppression of host innate immunity. Phosphorylated by IKBKE. Post-translationally, (Microbial infection) Cleaved by encephalomyocarditis virus (EMCV) protease 3C. This cleavage allows the virus to disrupt the TANK-TBK1-IKKepsilon-IRF3 complex, thereby inhibiting the induction of the IFN-beta signal pathway. In terms of processing, (Microbial infection) Cleaved by Seneca Valley virus protease 3C allowing the virus to suppress interferon type-I through both RIG-I and Toll-like receptor-dependent pathways. In terms of tissue distribution, ubiquitous.

It localises to the cytoplasm. Adapter protein involved in I-kappa-B-kinase (IKK) regulation which constitutively binds TBK1 and IKBKE playing a role in antiviral innate immunity. Acts as a regulator of TRAF function by maintaining them in a latent state. Blocks TRAF2 binding to LMP1 and inhibits LMP1-mediated NF-kappa-B activation. Negatively regulates NF-kappaB signaling and cell survival upon DNA damage. Plays a role as an adapter to assemble ZC3H12A, USP10 in a deubiquitination complex which plays a negative feedback response to attenuate NF-kappaB activation through the deubiquitination of IKBKG or TRAF6 in response to interleukin-1-beta (IL1B) stimulation or upon DNA damage. Promotes UBP10-induced deubiquitination of TRAF6 in response to DNA damage. May control negatively TRAF2-mediated NF-kappa-B activation signaled by CD40, TNFR1 and TNFR2. This is TRAF family member-associated NF-kappa-B activator (TANK) from Homo sapiens (Human).